The primary structure comprises 167 residues: Ribosome rescue factor SmrB (167 aa).

A Smr domain is found at 91–166 (LDLHGLTREQ…GEAAILILVD (76 aa)).

This sequence belongs to the SmrB family. Associates with collided ribosomes, but not with correctly translating polysomes.

In terms of biological role, acts as a ribosome collision sensor. Detects stalled/collided disomes (pairs of ribosomes where the leading ribosome is stalled and a second ribosome has collided with it) and endonucleolytically cleaves mRNA at the 5' boundary of the stalled ribosome. Stalled/collided disomes form a new interface (primarily via the 30S subunits) that binds SmrB. Cleaved mRNA becomes available for tmRNA ligation, leading to ribosomal subunit dissociation and rescue of stalled ribosomes. This Haemophilus influenzae (strain ATCC 51907 / DSM 11121 / KW20 / Rd) protein is Ribosome rescue factor SmrB.